Consider the following 564-residue polypeptide: Pyruvate decarboxylase (564 aa).

Positions 28 and 115 each coordinate pyruvate. Residues Thr-390 and 413-415 (GSI) contribute to the thiamine diphosphate site. Asp-444 serves as a coordination point for Mg(2+). Residues 445 to 446 (GS) and 471 to 476 (NNGYTI) contribute to the thiamine diphosphate site. Residues Asn-471 and Gly-473 each contribute to the Mg(2+) site. Glu-477 serves as a coordination point for pyruvate.

It belongs to the TPP enzyme family. As to quaternary structure, homotetramer. Mg(2+) is required as a cofactor. The cofactor is thiamine diphosphate.

It carries out the reaction a 2-oxocarboxylate + H(+) = an aldehyde + CO2. The enzyme catalyses pyruvate + H(+) = acetaldehyde + CO2. The protein is Pyruvate decarboxylase (PDC) of Hanseniaspora uvarum (Yeast).